We begin with the raw amino-acid sequence, 477 residues long: Phosphatidylinositol 4-kinase type 2-beta (477 aa).

The disordered stretch occupies residues 1 to 80 (MPEPPRDIMA…EDRSISASLS (80 aa)). Ser-45 carries the phosphoserine modification. The region spanning 116 to 447 (GVFPERISQG…AQMPCVIVEC (332 aa)) is the PI3K/PI4K catalytic domain. A G-loop region spans residues 122 to 128 (ISQGSSG). ATP contacts are provided by Ser-129 and Lys-144. Positions 149–151 (EPY) are important for substrate binding. Positions 157–170 (KWTKYVHKVCCPCC) are important for interaction with membranes. ATP-binding positions include 253–256 (QLFV) and 267–268 (RR). An important for interaction with membranes region spans residues 260–268 (KEAEYWLRR). The tract at residues 297–305 (RNTDRGNDN) is catalytic loop. The tract at residues 338–358 (AIDNGLAFPFKHPDEWRAYPF) is activation loop. Asp-340 serves as a coordination point for ATP. The interval 353–362 (WRAYPFHWAW) is important for interaction with membranes.

The protein belongs to the PI3/PI4-kinase family. Type II PI4K subfamily.

Its subcellular location is the cytoplasm. It localises to the cytosol. The protein localises to the golgi apparatus membrane. It is found in the endoplasmic reticulum membrane. The protein resides in the cell membrane. Its subcellular location is the early endosome membrane. It catalyses the reaction a 1,2-diacyl-sn-glycero-3-phospho-(1D-myo-inositol) + ATP = a 1,2-diacyl-sn-glycero-3-phospho-(1D-myo-inositol 4-phosphate) + ADP + H(+). Together with PI4K2A and the type III PI4Ks (PIK4CA and PIK4CB) it contributes to the overall PI4-kinase activity of the cell. This contribution may be especially significant in plasma membrane, endosomal and Golgi compartments. The phosphorylation of phosphatidylinositol (PI) to PI4P is the first committed step in the generation of phosphatidylinositol 4,5-bisphosphate (PIP2), a precursor of the second messenger inositol 1,4,5-trisphosphate (InsP3). Contributes to the production of InsP3 in stimulated cells and is likely to be involved in the regulation of vesicular trafficking. The sequence is that of Phosphatidylinositol 4-kinase type 2-beta (Pi4k2b) from Rattus norvegicus (Rat).